We begin with the raw amino-acid sequence, 608 residues long: Dihydroxy-acid dehydratase, chloroplastic (608 aa).

Residues 1-34 (MQATIFSPRATLFPCKPLLPSHNVNSRRPSIISC) constitute a chloroplast transit peptide. S35 bears the N-acetylserine mark. C100 lines the [2Fe-2S] cluster pocket. D132 contacts Mg(2+). C173 contacts [2Fe-2S] cluster. D174 is a Mg(2+) binding site. C245 provides a ligand contact to [2Fe-2S] cluster. E497 lines the Mg(2+) pocket. S523 serves as the catalytic Proton acceptor.

It belongs to the IlvD/Edd family. [2Fe-2S] cluster is required as a cofactor. Requires Mg(2+) as cofactor.

It localises to the plastid. The protein localises to the chloroplast. The catalysed reaction is (2R)-2,3-dihydroxy-3-methylbutanoate = 3-methyl-2-oxobutanoate + H2O. It catalyses the reaction (2R,3R)-2,3-dihydroxy-3-methylpentanoate = (S)-3-methyl-2-oxopentanoate + H2O. It participates in amino-acid biosynthesis; L-isoleucine biosynthesis; L-isoleucine from 2-oxobutanoate: step 3/4. Its pathway is amino-acid biosynthesis; L-valine biosynthesis; L-valine from pyruvate: step 3/4. Is highly competitively inhibited by the fungal sesquiterpenoid aspterric acid, which is effective as a herbicide in spray applications. In terms of biological role, functions in the biosynthesis of branched-chain amino acids. Catalyzes the dehydration of (2R,3R)-2,3-dihydroxy-3-methylpentanoate (2,3-dihydroxy-3-methylvalerate) into 2-oxo-3-methylpentanoate (2-oxo-3-methylvalerate) and of (2R)-2,3-dihydroxy-3-methylbutanoate (2,3-dihydroxyisovalerate) into 2-oxo-3-methylbutanoate (2-oxoisovalerate), the penultimate precursor to L-isoleucine and L-valine, respectively. The sequence is that of Dihydroxy-acid dehydratase, chloroplastic from Arabidopsis thaliana (Mouse-ear cress).